A 232-amino-acid chain; its full sequence is Orotidine 5'-phosphate decarboxylase (232 aa).

Residues Asp-13, Lys-35, 62-71 (DLKFHDIPNT), Thr-122, Arg-182, Gln-191, Gly-211, and Arg-212 contribute to the substrate site. Lys-64 serves as the catalytic Proton donor.

Belongs to the OMP decarboxylase family. Type 1 subfamily. Homodimer.

It carries out the reaction orotidine 5'-phosphate + H(+) = UMP + CO2. It participates in pyrimidine metabolism; UMP biosynthesis via de novo pathway; UMP from orotate: step 2/2. Catalyzes the decarboxylation of orotidine 5'-monophosphate (OMP) to uridine 5'-monophosphate (UMP). The chain is Orotidine 5'-phosphate decarboxylase from Pseudomonas paraeruginosa (strain DSM 24068 / PA7) (Pseudomonas aeruginosa (strain PA7)).